The sequence spans 89 residues: MEYQYPLDYDWSNEEMVTIVKFYEAIEKAYEKGIIREELMGLYRRFKEIVPSKAEEKKIDKEFQEVSGYSIYRAIQRAKEVEEQKVVKI.

The protein belongs to the UPF0223 family.

The polypeptide is UPF0223 protein BCG9842_B1176 (Bacillus cereus (strain G9842)).